The following is a 283-amino-acid chain: Non-selective voltage-gated ion channel VDAC1 (283 aa).

Ala-2 carries the N-acetylalanine modification. ATP is bound at residue Lys-12. Lys-12 is covalently cross-linked (Glycyl lysine isopeptide (Lys-Gly) (interchain with G-Cter in ubiquitin)). Ser-13 carries the post-translational modification Phosphoserine. Residue Thr-19 is modified to Phosphothreonine. An ATP-binding site is contributed by Lys-20. The residue at position 20 (Lys-20) is an N6-acetyllysine; alternate. The residue at position 20 (Lys-20) is an N6-succinyllysine; alternate. Residue Lys-20 forms a Glycyl lysine isopeptide (Lys-Gly) (interchain with G-Cter in ubiquitin); alternate linkage. 2 beta stranded membrane-spanning segments follow: residues 26 to 35 and 39 to 47; these read LIKLDLKTKS and LEFTSSGSA. Glycyl lysine isopeptide (Lys-Gly) (interchain with G-Cter in ubiquitin) cross-links involve residues Lys-53 and Lys-61. The chain crosses the membrane as a beta stranded span at residues 54–64; the sequence is VTGSLETKYRW. Tyr-67 is subject to Phosphotyrosine. 3 beta stranded membrane passes run 69 to 76, 80 to 89, and 95 to 104; these read LTFTEKWN, TLGTEITVED, and LKLTFDSSFS. Thr-107 bears the Phosphothreonine mark. Lys-109 carries the N6-acetyllysine; alternate modification. Residue Lys-109 forms a Glycyl lysine isopeptide (Lys-Gly) (interchain with G-Cter in ubiquitin); alternate linkage. Lys-110 participates in a covalent cross-link: Glycyl lysine isopeptide (Lys-Gly) (interchain with G-Cter in ubiquitin). 4 beta stranded membrane-spanning segments follow: residues 111-120, 123-130, 137-145, and 150-158; these read NAKIKTGYKR, INLGCDMD, SIRGALVLG, and LAGYQMNFE. Residue Lys-161 forms a Glycyl lysine isopeptide (Lys-Gly) (interchain with G-Cter in ubiquitin) linkage. Beta stranded transmembrane passes span 163 to 175, 178 to 185, 189 to 198, 202 to 211, 218 to 227, and 231 to 238; these read RVTQ…GYKT, FQLHTNVN, EFGGSIYQKV, LETAVNLAWT, RFGIAAKYQI, and ACFSAKVN. Phosphoserine; by NEK1 is present on Ser-193. Ser-240 bears the Phosphoserine mark. Position 242 to 244 (242 to 244) interacts with NAD(+); the sequence is LIG. A beta stranded membrane pass occupies residues 242-251; that stretch reads LIGLGYTQTL. Residue Lys-252 is modified to N6-acetyllysine. Residues 254-263 form a beta stranded membrane-spanning segment; that stretch reads GIKLTLSALL. Position 260 to 264 (260 to 264) interacts with NAD(+); it reads SALLD. Lys-266 carries the post-translational modification N6-acetyllysine; alternate. Residue Lys-266 forms a Glycyl lysine isopeptide (Lys-Gly) (interchain with G-Cter in ubiquitin); alternate linkage. A beta stranded transmembrane segment spans residues 273 to 282; the sequence is HKLGLGLEFQ. Lys-274 is covalently cross-linked (Glycyl lysine isopeptide (Lys-Gly) (interchain with G-Cter in ubiquitin)).

This sequence belongs to the eukaryotic mitochondrial porin family. Homodimer and homotrimer; in response to cyclic AMP or calcium; oligomerization is required for scramblase activity. Component of the mitochondrial permeability transition pore complex (mPTPC), at least composed of SPG7, VDAC1 and PPIF. Interacts with SPG7, NIPSNAP2 and SLC25A30. Interacts with hexokinases including HK1. The HK1-VDAC1 complex interacts with ATF2. Interacts with BCL2L1. Interacts with BAK1. Interacts with RTL10/BOP (via BH3 domain). Interacts with amyloid-beta and APP; induces VDAC1 dephosphorylation. Interacts with TMEM41B. Interacts with BCAP31. Interacts with HSPA9; this interaction couples ITPR1 to VDAC1. As to quaternary structure, (Microbial infection) Interacts with influenza A virus PB1-F2 protein. Post-translationally, phosphorylation at Ser-193 by NEK1 promotes the closed conformational state preventing excessive mitochondrial membrane permeability and subsequent apoptotic cell death after injury. Phosphorylation by the AKT-GSK3B axis stabilizes the protein probably by preventing ubiquitin-mediated proteasomal degradation. Ubiquitinated. Undergoes monoubiquitination and polyubiquitination by PRKN; monoubiquitination at Lys-274 inhibits apoptosis, whereas polyubiquitination leads to its degradation and promotes mitophagy. Deubiquitinated by USP30. As to expression, expressed in erythrocytes (at protein level). Expressed in heart, liver and skeletal muscle.

It localises to the mitochondrion outer membrane. Its subcellular location is the cell membrane. It is found in the membrane raft. It catalyses the reaction chloride(in) = chloride(out). It carries out the reaction K(+)(in) = K(+)(out). The catalysed reaction is ATP(in) = ATP(out). The enzyme catalyses Ca(2+)(in) = Ca(2+)(out). It catalyses the reaction Na(+)(in) = Na(+)(out). It carries out the reaction Mg(2+)(in) = Mg(2+)(out). The catalysed reaction is L-glutamate(out) = L-glutamate(in). The enzyme catalyses dopamine(out) = dopamine(in). It catalyses the reaction acetylcholine(in) = acetylcholine(out). It carries out the reaction Fe(III)-[cytochrome c](out) = Fe(III)-[cytochrome c](in). The catalysed reaction is a 1,2-diacyl-sn-glycero-3-phosphocholine(in) = a 1,2-diacyl-sn-glycero-3-phosphocholine(out). The enzyme catalyses a 1,2-diacyl-sn-glycero-3-phospho-L-serine(in) = a 1,2-diacyl-sn-glycero-3-phospho-L-serine(out). Inhibited by nitric oxide. Non-selective voltage-gated ion channel that mediates the transport of anions and cations through the mitochondrion outer membrane and plasma membrane. The channel at the outer mitochondrial membrane allows diffusion of small hydrophilic molecules; in the plasma membrane it is involved in cell volume regulation and apoptosis. It adopts an open conformation at low or zero membrane potential and a closed conformation at potentials above 30-40 mV. The open state has a weak anion selectivity whereas the closed state is cation-selective. Binds various signaling molecules, including the sphingolipid ceramide, the phospholipid phosphatidylcholine, and the sterols cholesterol and oxysterol. In depolarized mitochondria, acts downstream of PRKN and PINK1 to promote mitophagy or prevent apoptosis; polyubiquitination by PRKN promotes mitophagy, while monoubiquitination by PRKN decreases mitochondrial calcium influx which ultimately inhibits apoptosis. May participate in the formation of the permeability transition pore complex (PTPC) responsible for the release of mitochondrial products that triggers apoptosis. May mediate ATP export from cells. Part of a complex composed of HSPA9, ITPR1 and VDAC1 that regulates mitochondrial calcium-dependent apoptosis by facilitating calcium transport from the ER lumen to the mitochondria intermembrane space thus providing calcium for the downstream calcium channel MCU that directly releases it into mitochondria matrix. Mediates cytochrome c efflux. Its function is as follows. Catalyzes the scrambling of phospholipids across the outer mitochondrial membrane; the mechanism is unrelated to channel activity and is capable of translocating both anionic and zwitterionic phospholipids. This chain is Non-selective voltage-gated ion channel VDAC1, found in Homo sapiens (Human).